We begin with the raw amino-acid sequence, 223 residues long: Glutathione-specific gamma-glutamylcyclotransferase 1 (223 aa).

The segment at Met-1–Trp-26 is disordered. Ile-36–Ser-41 lines the substrate pocket. The active-site Proton acceptor is Glu-116.

It belongs to the gamma-glutamylcyclotransferase family. ChaC subfamily. In terms of assembly, interacts with NOTCH1 (via extracellular region). Widely expressed, with high expression in forebrain and anterior spinal cord. Expressed at intermediate level in the dorsal aorta and heart. Present throughout adult brain (at protein level).

The protein localises to the cytoplasm. Its subcellular location is the cytosol. It localises to the golgi apparatus. It is found in the trans-Golgi network. It carries out the reaction glutathione = L-cysteinylglycine + 5-oxo-L-proline. Catalyzes the cleavage of glutathione into 5-oxo-L-proline and a Cys-Gly dipeptide. Acts specifically on glutathione, but not on other gamma-glutamyl peptides. Glutathione depletion is an important factor for apoptosis initiation and execution. Acts as a pro-apoptotic component of the unfolded protein response pathway by mediating the pro-apoptotic effects of the ATF4-ATF3-DDIT3/CHOP cascade. Negative regulator of Notch signaling pathway involved in embryonic neurogenesis: acts by inhibiting Notch cleavage by furin, maintaining Notch in an immature inactive form, thereby promoting neurogenesis in embryos. This is Glutathione-specific gamma-glutamylcyclotransferase 1 from Mus musculus (Mouse).